The sequence spans 102 residues: Urease subunit beta (102 aa).

Belongs to the urease beta subunit family. As to quaternary structure, heterotrimer of UreA (gamma), UreB (beta) and UreC (alpha) subunits. Three heterotrimers associate to form the active enzyme.

The protein localises to the cytoplasm. The enzyme catalyses urea + 2 H2O + H(+) = hydrogencarbonate + 2 NH4(+). The protein operates within nitrogen metabolism; urea degradation; CO(2) and NH(3) from urea (urease route): step 1/1. The protein is Urease subunit beta of Methylibium petroleiphilum (strain ATCC BAA-1232 / LMG 22953 / PM1).